The following is a 322-amino-acid chain: GATA transcription factor 8 (322 aa).

The tract at residues Thr93–Cys168 is disordered. Residues Phe102–Leu141 show a composition bias toward low complexity. Residues Lys144–Arg154 show a composition bias toward basic residues. A Nuclear localization signal motif is present at residues Arg147–Arg154. A GATA-type zinc finger spans residues Gln225 to Pro279.

The protein belongs to the type IV zinc-finger family. Class A subfamily.

It is found in the nucleus. Transcriptional activator that specifically binds 5'-GATA-3' or 5'-GAT-3' motifs within gene promoters. May be involved in the regulation of some light-responsive genes. This Arabidopsis thaliana (Mouse-ear cress) protein is GATA transcription factor 8 (GATA8).